Consider the following 583-residue polypeptide: 2-succinyl-5-enolpyruvyl-6-hydroxy-3-cyclohexene-1-carboxylate synthase (583 aa).

The protein belongs to the TPP enzyme family. MenD subfamily. In terms of assembly, homodimer. It depends on Mg(2+) as a cofactor. Mn(2+) serves as cofactor. Thiamine diphosphate is required as a cofactor.

It carries out the reaction isochorismate + 2-oxoglutarate + H(+) = 5-enolpyruvoyl-6-hydroxy-2-succinyl-cyclohex-3-ene-1-carboxylate + CO2. It functions in the pathway quinol/quinone metabolism; 1,4-dihydroxy-2-naphthoate biosynthesis; 1,4-dihydroxy-2-naphthoate from chorismate: step 2/7. The protein operates within quinol/quinone metabolism; menaquinone biosynthesis. Functionally, catalyzes the thiamine diphosphate-dependent decarboxylation of 2-oxoglutarate and the subsequent addition of the resulting succinic semialdehyde-thiamine pyrophosphate anion to isochorismate to yield 2-succinyl-5-enolpyruvyl-6-hydroxy-3-cyclohexene-1-carboxylate (SEPHCHC). The protein is 2-succinyl-5-enolpyruvyl-6-hydroxy-3-cyclohexene-1-carboxylate synthase of Chlorobium limicola (strain DSM 245 / NBRC 103803 / 6330).